We begin with the raw amino-acid sequence, 193 residues long: MAASAWLEAGLARVLFYPTLLYTVFRGRVRGPAHRDWYHRIDHTVLLGALPLKNMTRRLVLDENVRGVITMNEEYETRFLCNTSKEWKKAGVEQLRLSTVDMTGVPTLANLHKGVQFALKYQALGQCVYVHCKAGRSRSATMVAAYLIQVHNWSPEEAIEAIAKIRSHISIRPSQLEVLKEFHKEITARAAKN.

The transit peptide at 1-31 (MAASAWLEAGLARVLFYPTLLYTVFRGRVRG) directs the protein to the mitochondrion. The region spanning 37–188 (WYHRIDHTVL…LKEFHKEITA (152 aa)) is the Tyrosine-protein phosphatase domain. Position 85 is an N6-succinyllysine (lysine 85). Cysteine 132 functions as the Phosphocysteine intermediate in the catalytic mechanism.

The protein belongs to the protein-tyrosine phosphatase family. Non-receptor class dual specificity subfamily. As to quaternary structure, interacts with STYXL1; the interaction inhibits PTPMT1 catalytic activity. Predominantly expressed in testis. Expressed at lower level in heart, brain, spleen, lung, liver, skeletal muscle, kidney, bone marrow, eye, lymph node, smooth muscle, prostate, thymus, stomach and uterus.

The protein localises to the mitochondrion inner membrane. It carries out the reaction a 1,2-diacyl-sn-glycero-3-phospho-(1'-sn-glycero-3'-phosphate) + H2O = a 1,2-diacyl-sn-glycero-3-phospho-(1'-sn-glycerol) + phosphate. It catalyses the reaction O-phospho-L-tyrosyl-[protein] + H2O = L-tyrosyl-[protein] + phosphate. The catalysed reaction is O-phospho-L-seryl-[protein] + H2O = L-seryl-[protein] + phosphate. The enzyme catalyses O-phospho-L-threonyl-[protein] + H2O = L-threonyl-[protein] + phosphate. It carries out the reaction 1,2-di-(9Z-octadecenoyl)-sn-glycero-3-phospho-(1'-sn-glycerol-3'-phosphate) + H2O = 1,2-di-(9Z-octadecenoyl)-sn-glycero-3-phospho-(1'-sn-glycerol) + phosphate. It catalyses the reaction 1,2-dioctanoyl-sn-glycero-3-phospho-(1D-myo-inositol-5-phosphate) + H2O = 1,2-dioctanoyl-sn-glycero-3-phospho-(1D-myo-inositol) + phosphate. The catalysed reaction is a 1-acyl-2-hexanoyl-sn-glycero-3-phospho-(1D-myo-inositol-5-phosphate) + H2O = a 1-acyl-2-hexanoyl-sn-glycero-3-phospho-(1D-myo-inositol) + phosphate. The enzyme catalyses 1,2-dibutyryl-sn-glycero-3-phospho-(1D-myo-inositol-5-phosphate) + H2O = 1,2-dibutyryl-sn-glycero-3-phospho-(1D-myo-inositol) + phosphate. It functions in the pathway phospholipid metabolism; phosphatidylglycerol biosynthesis; phosphatidylglycerol from CDP-diacylglycerol: step 2/2. Functionally, lipid phosphatase which dephosphorylates phosphatidylglycerophosphate (PGP) to phosphatidylglycerol (PG). PGP is an essential intermediate in the biosynthetic pathway of cardiolipin, a mitochondrial-specific phospholipid regulating the membrane integrity and activities of the organelle. Has also been shown to display phosphatase activity toward phosphoprotein substrates, specifically mediates dephosphorylation of mitochondrial proteins, thereby playing an essential role in ATP production. Has probably a preference for proteins phosphorylated on Ser and/or Thr residues compared to proteins phosphorylated on Tyr residues. Probably involved in regulation of insulin secretion in pancreatic beta cells. May prevent intrinsic apoptosis, probably by regulating mitochondrial membrane integrity. This is Phosphatidylglycerophosphatase and protein-tyrosine phosphatase 1 from Mus musculus (Mouse).